The primary structure comprises 580 residues: Pentatricopeptide repeat-containing protein At5g10690 (580 aa).

9 PPR repeats span residues 76 to 110, 112 to 142, 151 to 181, 189 to 223, 224 to 254, 266 to 296, 302 to 337, 342 to 376, and 382 to 417; these read NTIV…GGIG, DSIS…IEYG, SSSL…YDIL, SVLI…RLEP, DRLT…MKEK, DVVT…MKLC, DRTA…GANE, KPHL…SSGS, and QQEA…KTIP. The CBS domain maps to 486 to 553; it reads VPIVDDRGSC…IVVHCGNFSG (68 aa).

Belongs to the PPR family. P subfamily.

This Arabidopsis thaliana (Mouse-ear cress) protein is Pentatricopeptide repeat-containing protein At5g10690 (CBSPPR1).